The primary structure comprises 300 residues: Ribosomal protein L11 methyltransferase (300 aa).

Threonine 147, glycine 168, aspartate 190, and asparagine 236 together coordinate S-adenosyl-L-methionine.

The protein belongs to the methyltransferase superfamily. PrmA family.

Its subcellular location is the cytoplasm. The catalysed reaction is L-lysyl-[protein] + 3 S-adenosyl-L-methionine = N(6),N(6),N(6)-trimethyl-L-lysyl-[protein] + 3 S-adenosyl-L-homocysteine + 3 H(+). Methylates ribosomal protein L11. The polypeptide is Ribosomal protein L11 methyltransferase (Leptospira borgpetersenii serovar Hardjo-bovis (strain JB197)).